A 354-amino-acid chain; its full sequence is 3-isopropylmalate dehydrogenase (354 aa).

4 residues coordinate substrate: arginine 96, arginine 106, arginine 132, and aspartate 223. Residues aspartate 223, aspartate 247, and aspartate 251 each contribute to the Mg(2+) site. Residue 283 to 295 coordinates NAD(+); the sequence is GSAPDIAGQGKAD.

The protein belongs to the isocitrate and isopropylmalate dehydrogenases family. LeuB type 2 subfamily. As to quaternary structure, homodimer. Requires Mg(2+) as cofactor. It depends on Mn(2+) as a cofactor.

It localises to the cytoplasm. It carries out the reaction (2R,3S)-3-isopropylmalate + NAD(+) = 4-methyl-2-oxopentanoate + CO2 + NADH. It functions in the pathway amino-acid biosynthesis; L-leucine biosynthesis; L-leucine from 3-methyl-2-oxobutanoate: step 3/4. Functionally, catalyzes the oxidation of 3-carboxy-2-hydroxy-4-methylpentanoate (3-isopropylmalate) to 3-carboxy-4-methyl-2-oxopentanoate. The product decarboxylates to 4-methyl-2 oxopentanoate. This chain is 3-isopropylmalate dehydrogenase, found in Thermobifida fusca (strain YX).